Consider the following 209-residue polypeptide: Uracil phosphoribosyltransferase (209 aa).

5-phospho-alpha-D-ribose 1-diphosphate is bound by residues Arg-79, Arg-104, and 131 to 139 (DPMLATGGS). Uracil-binding positions include Ile-194 and 199–201 (GDA). 5-phospho-alpha-D-ribose 1-diphosphate is bound at residue Asp-200.

Belongs to the UPRTase family. Requires Mg(2+) as cofactor.

The catalysed reaction is UMP + diphosphate = 5-phospho-alpha-D-ribose 1-diphosphate + uracil. It functions in the pathway pyrimidine metabolism; UMP biosynthesis via salvage pathway; UMP from uracil: step 1/1. Its activity is regulated as follows. Allosterically activated by GTP. Functionally, catalyzes the conversion of uracil and 5-phospho-alpha-D-ribose 1-diphosphate (PRPP) to UMP and diphosphate. This chain is Uracil phosphoribosyltransferase, found in Citrifermentans bemidjiense (strain ATCC BAA-1014 / DSM 16622 / JCM 12645 / Bem) (Geobacter bemidjiensis).